The chain runs to 224 residues: Adenylate kinase (224 aa).

10–15 contributes to the ATP binding site; the sequence is GSGKST. The segment at 30–59 is NMP; it reads SSGDLIRREIERKSSLGREMEAYLSRGDLI. Residues S31, R36, 57-59, 83-86, and Q90 each bind AMP; these read DLI and GYPR. Residues 124–161 are LID; the sequence is GRRICPNCGAVYHVKYNPPKVPGICDVCGSELIQRADD. ATP is bound at residue R125. Zn(2+) contacts are provided by C128 and C131. 134–135 provides a ligand contact to ATP; sequence VY. Zn(2+)-binding residues include C148 and C151. AMP contacts are provided by R158 and R169. Position 197 (G197) interacts with ATP.

It belongs to the adenylate kinase family. In terms of assembly, monomer.

Its subcellular location is the cytoplasm. The catalysed reaction is AMP + ATP = 2 ADP. It functions in the pathway purine metabolism; AMP biosynthesis via salvage pathway; AMP from ADP: step 1/1. Its function is as follows. Catalyzes the reversible transfer of the terminal phosphate group between ATP and AMP. Plays an important role in cellular energy homeostasis and in adenine nucleotide metabolism. This Thermococcus kodakarensis (strain ATCC BAA-918 / JCM 12380 / KOD1) (Pyrococcus kodakaraensis (strain KOD1)) protein is Adenylate kinase.